The following is a 244-amino-acid chain: Large ribosomal subunit protein uL30w (244 aa).

The protein belongs to the universal ribosomal protein uL30 family.

The chain is Large ribosomal subunit protein uL30w (RPL7D) from Arabidopsis thaliana (Mouse-ear cress).